The following is a 100-amino-acid chain: Large ribosomal subunit protein uL23 (100 aa).

The protein belongs to the universal ribosomal protein uL23 family. In terms of assembly, part of the 50S ribosomal subunit. Contacts protein L29, and trigger factor when it is bound to the ribosome.

Functionally, one of the early assembly proteins it binds 23S rRNA. One of the proteins that surrounds the polypeptide exit tunnel on the outside of the ribosome. Forms the main docking site for trigger factor binding to the ribosome. This Pseudoalteromonas translucida (strain TAC 125) protein is Large ribosomal subunit protein uL23.